A 201-amino-acid polypeptide reads, in one-letter code: UPF0056 membrane protein PH0760 (201 aa).

The next 6 membrane-spanning stretches (helical) occupy residues phenylalanine 8–phenylalanine 28, isoleucine 49–phenylalanine 69, isoleucine 73–serine 93, valine 111–methionine 131, glycine 140–glycine 160, and leucine 181–isoleucine 201.

It belongs to the UPF0056 (MarC) family.

The protein localises to the cell membrane. In Pyrococcus horikoshii (strain ATCC 700860 / DSM 12428 / JCM 9974 / NBRC 100139 / OT-3), this protein is UPF0056 membrane protein PH0760.